Consider the following 183-residue polypeptide: Orotate phosphoribosyltransferase (183 aa).

Residues Arg-100, Lys-101, Lys-104, His-106, and 126–134 (EDVVTTGSS) each bind 5-phospho-alpha-D-ribose 1-diphosphate. Orotate is bound by residues Thr-130 and Arg-158.

Belongs to the purine/pyrimidine phosphoribosyltransferase family. PyrE subfamily. Homodimer. The cofactor is Mg(2+).

The enzyme catalyses orotidine 5'-phosphate + diphosphate = orotate + 5-phospho-alpha-D-ribose 1-diphosphate. The protein operates within pyrimidine metabolism; UMP biosynthesis via de novo pathway; UMP from orotate: step 1/2. Its function is as follows. Catalyzes the transfer of a ribosyl phosphate group from 5-phosphoribose 1-diphosphate to orotate, leading to the formation of orotidine monophosphate (OMP). The protein is Orotate phosphoribosyltransferase of Aquifex aeolicus (strain VF5).